The sequence spans 189 residues: Peptidyl-tRNA hydrolase (189 aa).

Y15 lines the tRNA pocket. H20 serves as the catalytic Proton acceptor. 3 residues coordinate tRNA: F66, N68, and N114.

This sequence belongs to the PTH family. As to quaternary structure, monomer.

Its subcellular location is the cytoplasm. The enzyme catalyses an N-acyl-L-alpha-aminoacyl-tRNA + H2O = an N-acyl-L-amino acid + a tRNA + H(+). Its function is as follows. Hydrolyzes ribosome-free peptidyl-tRNAs (with 1 or more amino acids incorporated), which drop off the ribosome during protein synthesis, or as a result of ribosome stalling. In terms of biological role, catalyzes the release of premature peptidyl moieties from peptidyl-tRNA molecules trapped in stalled 50S ribosomal subunits, and thus maintains levels of free tRNAs and 50S ribosomes. This chain is Peptidyl-tRNA hydrolase, found in Streptococcus pyogenes serotype M1.